The following is an 804-amino-acid chain: MDLPVDEWKSYLLQKWASLPTSVQVTISTAETLRDIFLHSSSLLQPEDELFLKRLSKGYLVGKDLDAPLFYREEGNKKFQEKDYTGAAVLYSKGVSHSRPNTEDMSLCYANRSAALFHLGEYETCLKDINRAQTHGYPERLQPKIMLRKAECLVALGRLQEASQTISDLERNFTATPTLANVRPQTLQRNLHHLKMKVQEKDKLTETFPAALAKTLEDAALREENEQLSSASSSVGLCIDPLKGRYLVATKDILPGELLVKEDAFVSVLNPGELPPPHHGLDSKWDTRVTNGDLYCHRCLKHTLATVPCDGCSYAKYCSQECLQQAWELYHRTECPLGGLLLTLGVFCHIALRLTLLVGFEDVRKIITKVCDKISNKDICLPESNNQVKTLNYGLGESEKSGNIIETPIPGCDINGKYENNYNAVFNLLPHTENHSPEHKFLCALCVSALCRQLEAASFQAIPTERSVNSSQLQAAVTPELCPDVTIWGVAMLRHMLQLHCNAQAMTTIQHTGSKGSIVTDSRQVRLATGIFPVVSLLNHSCSPNTSMSFISTVAAIQASQRIRKGQEILHCYGPHKSRMGVAERQQKLRSQYFFDCACPACQTEAHRMAAEPRWEAFCCNSCGAPMQGDDVLHCGSRSCAESAVSRDHLVSRLQDLQQQVGVAQKLLRDGELERAVQQLLGCQRDAESFLWAEHALVGEIADGLARACAALGDWQKAATHLQRSLRVVEVRHGPSSVEMGHELFKLAQIFFNGFAVPEALSTIQKAEEALLLHCGPWDDEIQELQKMKSCLLDLPPTPVGPAV.

112-114 (RSA) serves as a coordination point for S-adenosyl-L-methionine. In terms of domain architecture, SET spans 233 to 574 (SSVGLCIDPL…KGQEILHCYG (342 aa)). 8 residues coordinate Zn(2+): cysteine 296, cysteine 299, cysteine 309, cysteine 312, cysteine 318, cysteine 322, histidine 331, and cysteine 335. The MYND-type zinc finger occupies 296–335 (CHRCLKHTLATVPCDGCSYAKYCSQECLQQAWELYHRTEC). S-adenosyl-L-methionine contacts are provided by residues asparagine 427, 539–540 (NH), tyrosine 573, and phenylalanine 595.

This sequence belongs to the class V-like SAM-binding methyltransferase superfamily. Interacts (via MYND-type zinc finger) with HDAC1.

It is found in the nucleus. Its subcellular location is the cytoplasm. The enzyme catalyses L-lysyl-[protein] + S-adenosyl-L-methionine = N(6)-methyl-L-lysyl-[protein] + S-adenosyl-L-homocysteine + H(+). Functionally, protein-lysine N-methyltransferase. Monomethylates PRMT5, modulating its transcriptional activity. May also act as a histone methyltransferase. Plays a critical role in cardiac development. Acts as a key epigenetic regulator of gene expression during cardiac development via its dual activities as a methyltransferase and negative regulator of HDAC1. The polypeptide is Protein-lysine N-methyltransferase SMYD4 (SMYD4) (Pongo abelii (Sumatran orangutan)).